The chain runs to 179 residues: Small ribosomal subunit protein eS10x (179 aa).

The tract at residues 90 to 179 (TLKKSAKPGG…AAAPSGSGLP (90 aa)) is disordered. The segment covering 108–129 (DRSRGPRHEGGDRPRFGDRDGY) has biased composition (basic and acidic residues). Positions 134–144 (RAGGEFGGEKG) are enriched in gly residues. A compositionally biased stretch (low complexity) spans 145-156 (GAPADYQPSFQG). The segment covering 157–167 (SGRGFGRGAGG) has biased composition (gly residues). A compositionally biased stretch (low complexity) spans 168–179 (YSAAAPSGSGLP).

This sequence belongs to the eukaryotic ribosomal protein eS10 family.

The protein localises to the cytoplasm. The chain is Small ribosomal subunit protein eS10x (RPS10C) from Arabidopsis thaliana (Mouse-ear cress).